The following is a 251-amino-acid chain: Large ribosomal subunit protein uL16m (251 aa).

A mitochondrion-targeting transit peptide spans 1 to 29 (MWRLLARASAPLLRVPLSDSWALLPASAG).

The protein belongs to the universal ribosomal protein uL16 family. In terms of assembly, component of the mitochondrial large ribosomal subunit (mt-LSU). Mature mammalian 55S mitochondrial ribosomes consist of a small (28S) and a large (39S) subunit. The 28S small subunit contains a 12S ribosomal RNA (12S mt-rRNA) and 30 different proteins. The 39S large subunit contains a 16S rRNA (16S mt-rRNA), a copy of mitochondrial valine transfer RNA (mt-tRNA(Val)), which plays an integral structural role, and 52 different proteins.

Its subcellular location is the mitochondrion. The protein is Large ribosomal subunit protein uL16m (MRPL16) of Homo sapiens (Human).